A 268-amino-acid chain; its full sequence is Tryptophan synthase alpha chain (268 aa).

Active-site proton acceptor residues include Glu49 and Asp60.

This sequence belongs to the TrpA family. In terms of assembly, tetramer of two alpha and two beta chains.

It carries out the reaction (1S,2R)-1-C-(indol-3-yl)glycerol 3-phosphate + L-serine = D-glyceraldehyde 3-phosphate + L-tryptophan + H2O. The protein operates within amino-acid biosynthesis; L-tryptophan biosynthesis; L-tryptophan from chorismate: step 5/5. Its function is as follows. The alpha subunit is responsible for the aldol cleavage of indoleglycerol phosphate to indole and glyceraldehyde 3-phosphate. The chain is Tryptophan synthase alpha chain from Vibrio parahaemolyticus serotype O3:K6 (strain RIMD 2210633).